A 195-amino-acid polypeptide reads, in one-letter code: L-rhamnose-binding lectin CSL2 (195 aa).

2 SUEL-type lectin domains span residues 1–97 (TRVV…YTCL) and 104–195 (TCEG…YTCG).

In terms of biological role, L-rhamnose binding lectin. Has hemagglutinating activity towards rabbit erythrocytes and human type B erythrocytes. Hemagglutinating activity is inhibited by smooth-type lipopolysaccharide (LPS) from S.flexneri 1A and E.coli K12, but not by rough-type LPS from S.flexneri, E.coli K12 and E.coli EH100. Agglutinates E.coli K12 and B.subtilis. The protein is L-rhamnose-binding lectin CSL2 of Oncorhynchus keta (Chum salmon).